The chain runs to 105 residues: Heat shock protein HspQ (105 aa).

Belongs to the HspQ family.

The protein localises to the cytoplasm. In terms of biological role, involved in the degradation of certain denaturated proteins, including DnaA, during heat shock stress. This is Heat shock protein HspQ from Baumannia cicadellinicola subsp. Homalodisca coagulata.